A 471-amino-acid chain; its full sequence is O-acetyltransferase astG (471 aa).

This sequence belongs to the fumigaclavine B O-acetyltransferase family. Monomer.

The enzyme catalyses dideacetyl astellolide A + acetyl-CoA = 14-deacetyl astellolide A + CoA. It carries out the reaction dideacetyl astellolide B + acetyl-CoA = 14-deacetyl astellolide B + CoA. Its pathway is secondary metabolite biosynthesis; terpenoid biosynthesis. Functionally, O-acetyltransferase; part of the gene cluster that mediates the biosynthesis of astellolides, drimane-type sesquiterpene esters that show antimicrobial, anti-inflammatory, and anti-tumor activities. The first step in astellolide biosynthesis is performed by the sesquiterpene cyclase astC that catalyzes the formation of drimanyl pyrophosphate from farnesyl pyrophosphate. Drimanyl pyrophosphate is then dephosphorylated by the sesquiterpene phosphatase astI to produce drimanyl monophosphate which is further dephosphorylated to drim-8-ene-11-ol by atsK. Drim-8-ene-11-ol is converted to confertifolin, probably by the cytochrome P450 monooxygenase astD and/or the dehydrogenase astE. The cytochrome P450 monooxygenases astB, astF and astJ then hydroxylate confertifolin at C6, C14, or C15 to form trihydroxy confertifolin. The nonribosomal peptide synthetase astA catalyzes ester bond formation between trihydroxy contifolin and benzoic acid (BA) or 4-hydroxy benzoic acid (4HBA), leading to the formation of dideacetyl astellolides A and B, respectively. Finally, the O-acetyltransferase astG converts dideacetyl astellolides A and B into deacetyl astellolides A and B. The chain is O-acetyltransferase astG from Aspergillus oryzae (strain ATCC 42149 / RIB 40) (Yellow koji mold).